The primary structure comprises 557 residues: Hepatocyte nuclear factor 1-beta (557 aa).

Positions 1-31 are dimerization; the sequence is MVSKLTSLQQELLSALLSSGVTKEVLIQALE. The HNF-p1 domain maps to 1–32; the sequence is MVSKLTSLQQELLSALLSSGVTKEVLIQALEE. Phosphoserine is present on residues Ser-49, Ser-52, Ser-75, and Ser-80. The segment at 66–85 is disordered; that stretch reads TNGHAKGRLSGDEGSEDGDD. In terms of domain architecture, POU-specific atypical spans 93-188; the sequence is KELQALNTEE…ILRQFNQTVQ (96 aa). A DNA-binding region (homeobox; HNF1-type) is located at residues 231 to 311; it reads MRRNRFKWGP…NRRKEEAFRQ (81 aa). Residues 324-370 are disordered; the sequence is HNLNPLLTHGSPHHQPSSSPPNKLSGVRYSQPGNNEVTSSSTISHHG. Residues 354-370 are compositionally biased toward polar residues; that stretch reads QPGNNEVTSSSTISHHG.

This sequence belongs to the HNF1 homeobox family. As to quaternary structure, binds DNA as a dimer. Can form homodimer or heterodimer with HNF1-alpha. Interacts (via HNF-p1 domain) with PCBD1; the interaction increases its transactivation activity. Liver, kidney and intestine.

The protein resides in the nucleus. Transcription factor that binds to the inverted palindrome 5'-GTTAATNATTAAC-3'. Binds to the FPC element in the cAMP regulatory unit of the PLAU gene. Transcriptional activity is increased by coactivator PCBD1. This Rattus norvegicus (Rat) protein is Hepatocyte nuclear factor 1-beta (Hnf1b).